The chain runs to 300 residues: Ribosomal RNA small subunit methyltransferase H (300 aa).

S-adenosyl-L-methionine contacts are provided by residues 38–40, E55, I85, D102, and H109; that span reads GGH.

The protein belongs to the methyltransferase superfamily. RsmH family.

The protein resides in the cytoplasm. It catalyses the reaction cytidine(1402) in 16S rRNA + S-adenosyl-L-methionine = N(4)-methylcytidine(1402) in 16S rRNA + S-adenosyl-L-homocysteine + H(+). Its function is as follows. Specifically methylates the N4 position of cytidine in position 1402 (C1402) of 16S rRNA. The polypeptide is Ribosomal RNA small subunit methyltransferase H (Brachyspira hyodysenteriae (strain ATCC 49526 / WA1)).